Here is a 207-residue protein sequence, read N- to C-terminus: Octanoyltransferase (207 aa).

Residues 29 to 204 (DDTADELWLV…ELMVQLGDEE (176 aa)) form the BPL/LPL catalytic domain. Residues 68–75 (RGGQVTYH), 135–137 (SLG), and 148–150 (GVA) each bind substrate. Residue Cys-166 is the Acyl-thioester intermediate of the active site.

It belongs to the LipB family.

It is found in the cytoplasm. The catalysed reaction is octanoyl-[ACP] + L-lysyl-[protein] = N(6)-octanoyl-L-lysyl-[protein] + holo-[ACP] + H(+). It participates in protein modification; protein lipoylation via endogenous pathway; protein N(6)-(lipoyl)lysine from octanoyl-[acyl-carrier-protein]: step 1/2. Catalyzes the transfer of endogenously produced octanoic acid from octanoyl-acyl-carrier-protein onto the lipoyl domains of lipoate-dependent enzymes. Lipoyl-ACP can also act as a substrate although octanoyl-ACP is likely to be the physiological substrate. The chain is Octanoyltransferase from Methylococcus capsulatus (strain ATCC 33009 / NCIMB 11132 / Bath).